The sequence spans 151 residues: Caveolin-3 (151 aa).

Residues 1–83 (MMTEEHTDLE…RLLSTLLGVP (83 aa)) lie on the Cytoplasmic side of the membrane. Lys38 is covalently cross-linked (Glycyl lysine isopeptide (Lys-Gly) (interchain with G-Cter in SUMO3)). The interval 64–114 (TFTVSKYWCYRLLSTLLGVPLALLWGFLFACISFCHIWAVVPCIKSYLIEI) is required for interaction with DAG1. Positions 84–104 (LALLWGFLFACISFCHIWAVV) form an intramembrane region, helical. Residues 105 to 151 (PCIKSYLIEIQCISHIYSLCIRTFCNPLFAALGQVCSNIKVVLRREG) lie on the Cytoplasmic side of the membrane.

Belongs to the caveolin family. In terms of assembly, homooligomer. Interacts with DYSF. Interacts with DLG1 and KCNA5; forms a ternary complex. Interacts with DAG1 (via its C-terminal); the interaction prevents binding of DAG1 with DMD. Interacts with TRIM72. Interacts with MUSK; may regulate MUSK signaling. Interacts with POPDC1. Interacts with CAVIN1, CAVIN2 and CAVIN4. Sumoylation with SUMO3 by PIAS4 may reduce agonist-induced internalization and desensitization of adrenergic receptor ABRD2. Expressed predominantly in muscle.

It localises to the golgi apparatus membrane. The protein localises to the cell membrane. The protein resides in the membrane. Its subcellular location is the caveola. It is found in the sarcolemma. Its function is as follows. May act as a scaffolding protein within caveolar membranes. Interacts directly with G-protein alpha subunits and can functionally regulate their activity. May also regulate voltage-gated potassium channels. Plays a role in the sarcolemma repair mechanism of both skeletal muscle and cardiomyocytes that permits rapid resealing of membranes disrupted by mechanical stress. Mediates the recruitment of CAVIN2 and CAVIN3 proteins to the caveolae. The sequence is that of Caveolin-3 from Mus musculus (Mouse).